A 308-amino-acid chain; its full sequence is Staphylococcal superantigen-like 4 (308 aa).

Residues 1–30 (MKITTIAKTSLALGLLTTGVITTTTQAANA) form the signal peptide. The tract at residues 32–117 (TLSSTKVEAP…TTKQVPTEIN (86 aa)) is disordered. Composition is skewed to polar residues over residues 33–47 (LSSTKVEAPQSTPPS) and 55–76 (SKPNATTPPSTKVEAPQQTANA). Over residues 77 to 93 (TTPPSTKVTTPPSTNTP) the composition is skewed to low complexity. Residues 94 to 114 (QPMQSTKSDTPQSPTTKQVPT) are compositionally biased toward polar residues. The sialyl Lewis X-binding stretch occupies residues 180-278 (VDVFVVLEEN…VIKMKNGGKY (99 aa)).

It belongs to the staphylococcal/streptococcal toxin family.

It is found in the secreted. In terms of biological role, secreted protein that plays a role in immune innate response inhibition by interfering with host TLR2-mediated pathway. The chain is Staphylococcal superantigen-like 4 from Staphylococcus aureus (strain NCTC 8325 / PS 47).